Reading from the N-terminus, the 108-residue chain is Latartoxin-2c (108 aa).

A signal peptide spans 1–19; it reads MKVLVITALCFILLQNVLG. The propeptide at 20 to 42 is removed in mature form; it reads EDTYEDLQNYIENLINENQDEAR. The Processing quadruplet motif signature appears at 39-42; that stretch reads DEAR. Cystine bridges form between cysteine 44-cysteine 61, cysteine 51-cysteine 72, cysteine 60-cysteine 84, and cysteine 74-cysteine 82. An Isoleucine amide modification is found at isoleucine 107.

This sequence belongs to the neurotoxin 19 (CSTX) family. 11 (latartoxin) subfamily. In terms of processing, contains 4 disulfide bonds. Post-translationally, cleavage of the propeptide depends on the processing quadruplet motif (XXXR, with at least one of X being E). As to expression, expressed by the venom gland.

Its subcellular location is the secreted. Its function is as follows. Insect toxin. The protein is Latartoxin-2c of Lachesana tarabaevi (Spider).